The chain runs to 314 residues: Porphobilinogen deaminase (314 aa).

S-(dipyrrolylmethanemethyl)cysteine is present on cysteine 243.

Belongs to the HMBS family. Monomer. Requires dipyrromethane as cofactor.

The catalysed reaction is 4 porphobilinogen + H2O = hydroxymethylbilane + 4 NH4(+). It functions in the pathway porphyrin-containing compound metabolism; protoporphyrin-IX biosynthesis; coproporphyrinogen-III from 5-aminolevulinate: step 2/4. In terms of biological role, tetrapolymerization of the monopyrrole PBG into the hydroxymethylbilane pre-uroporphyrinogen in several discrete steps. This is Porphobilinogen deaminase from Bordetella bronchiseptica (strain ATCC BAA-588 / NCTC 13252 / RB50) (Alcaligenes bronchisepticus).